The following is a 374-amino-acid chain: DNA replication and repair protein RecF (374 aa).

30 to 37 (GPNAQGKT) is an ATP binding site.

Belongs to the RecF family.

Its subcellular location is the cytoplasm. Its function is as follows. The RecF protein is involved in DNA metabolism; it is required for DNA replication and normal SOS inducibility. RecF binds preferentially to single-stranded, linear DNA. It also seems to bind ATP. This chain is DNA replication and repair protein RecF, found in Lactobacillus gasseri (strain ATCC 33323 / DSM 20243 / BCRC 14619 / CIP 102991 / JCM 1131 / KCTC 3163 / NCIMB 11718 / NCTC 13722 / AM63).